The following is an 813-amino-acid chain: MASTPRAKTFKSPTKTPSNIYRKSYLSPSSTSHTPQTPETHTPLRRSARHVSRKIDLGNDPIDAPGNDPIEGMNLIRKRERAPRKPTTDVVPSKSKKTETPKKKKKIDSFTPVSPIRSETIKKTKKKKRVYYNKVEFDETEFEIGDDVYVKRREDSNSDEEEDPEIEDCQICFKSDTNIMIECDDCLGGFHLKCLKPPLKEVPEGDWICQFCEVKKSGQSQTLDLPKPPEGKKLARTMREKLLSGDLWAARIDKLWKEVDDGVYWIRARWYMIPEETVSGRQPHNLKRELYLTNDFADIEMECILRHCSVKCPKEFSKASNDGDDVFLCEYEYDVHWRSFKRLAELADGDSDSDQEWNGRKEEEVDDSDEEMELDDEVLKSKRGGLTSARGGANSRKGRFFGVEKVGMKLIPEHVRCHKQSELEKAKATLLLATRPKSLPCRSKEMEEITSFIKGSISDDQCLGRCMYIHGVPGTGKTISVLSVMKNLKAEVEEGSVSPYCFVEINGLKLASPENIYSVIYEALSGHRVGWKKALQCLNERFAEGKRIGKEDEKPCILLIDELDLLVTRNQSVLYNILDWPTKPNSKLVVLGIANTMDLPEKLLPRISSRMGIQRLCFGPYNHTQLQEIISTRLNGIDAFEKTAIEFASRKVAAISGDARRALEICRRAAEVADHRLNTNKSAKNQLVIMADVEAAIQEMFQAPHIQVMKSVSKLSKIFLTAMVHELYKTGMAETTFDRVATTVSSICLTNGEAFPGWDILLKIGCDLGECRIILCEPGEKHRLQKLQLNFPSDDVAFALKDNKDLPWLANYL.

The disordered stretch occupies residues 1-109 (MASTPRAKTF…TPKKKKKIDS (109 aa)). The span at 11 to 21 (KSPTKTPSNIY) shows a compositional bias: polar residues. Residues 27–41 (SPSSTSHTPQTPETH) are compositionally biased toward low complexity. Positions 43 to 52 (PLRRSARHVS) are enriched in basic residues. The Nuclear localization signal signature appears at 83-90 (PRKPTTDV). Residues 163–187 (DPEIEDCQICFKSDTNIMIECDDCL) are histone H3 binding. The PHD-type zinc-finger motif lies at 166-215 (IEDCQICFKSDTNIMIECDDCLGGFHLKCLKPPLKEVPEGDWICQFCEVK). Positions 169, 172, 183, 186, 191, and 194 each coordinate Zn(2+). The interval 203 to 207 (PEGDW) is histone H3 binding. Zn(2+)-binding residues include Cys-209 and Cys-212. One can recognise a BAH domain in the interval 226–344 (PKPPEGKKLA…VHWRSFKRLA (119 aa)). Residues 319-324 (ASNDGD) are histone H3 binding. A disordered region spans residues 349–372 (GDSDSDQEWNGRKEEEVDDSDEEM). Positions 436-803 (PKSLPCRSKE…DDVAFALKDN (368 aa)) are necessary and sufficient for ORC complex assembly. Residue 471–479 (GVPGTGKTI) coordinates ATP. Mg(2+) contacts are provided by Asp-561 and Glu-562. Glu-562, Asn-595, and Arg-660 together coordinate ATP.

This sequence belongs to the ORC1 family. As to quaternary structure, component of the origin recognition complex (ORC) composed of at least ORC1 (ORC1A or ORC1B), ORC2, ORC3, ORC4, ORC5 and ORC6. ORC is regulated in a cell-cycle and development dependent manner. It is sequentially assembled at the exit from anaphase of mitosis and disassembled as cells enter S phase. Interacts directly with ORC2 and ORC5. Binds mostly unmodified histone H3, and, with lower efficiency, H3K4me1 H3K4me2 and H3K4me3. In terms of tissue distribution, follow a cell-cycle regulation with a peak at the G1/S-phase. Mostly expressed in flower buds, and, to a lower exent, in roots, leaves and stems.

It is found in the nucleus. Essential protein required for ovules fertilization. Component of the origin recognition complex (ORC) that binds origins of replication. It has a role in both chromosomal replication and mating type transcriptional silencing. Binds to the ARS consensus sequence (ACS) of origins of replication. H3K4me3 effector that positively regulates the transcription of a subset of genes. The sequence is that of Origin of replication complex subunit 1B from Arabidopsis thaliana (Mouse-ear cress).